Here is a 477-residue protein sequence, read N- to C-terminus: Protein RdxB (477 aa).

Residues 1 to 29 lie on the Cytoplasmic side of the membrane; it reads MTSPDTQTSSLYAKREPVFPKRVSGKFRS. The helical transmembrane segment at 30–50 threads the bilayer; that stretch reads LKWWIMGVTLGIYYIAPWLRW. Topologically, residues 51–81 are periplasmic; it reads DRGPNLPDQAILVDLANRRFFFFMIEIWPHE. A helical membrane pass occupies residues 82-102; the sequence is FYFVAGLLIMAGLGLFLFTSA. Residues 103-154 lie on the Cytoplasmic side of the membrane; sequence AGRVWCGYACPQTVWTDLFILVERWVEGDRNARIRLLRQRWDLEKTRKYLTK. The chain crosses the membrane as a helical span at residues 155 to 175; sequence WTLWLLIGLATGGAWVFYFTD. Topologically, residues 176–189 are periplasmic; it reads APTLLVDLLTGNAH. A helical transmembrane segment spans residues 190–210; it reads PVAYITMATLTATTFAFGGFA. Residues 211–338 are Cytoplasmic-facing; it reads REQICIYACP…SAWRHVFRLR (128 aa). In terms of domain architecture, 4Fe-4S ferredoxin-type spans 253 to 281; that stretch reads EPLSPDQGDCIDCMACVNVCPMGIDIRDG. Positions 262, 265, 268, 272, 286, 289, 292, and 296 each coordinate [4Fe-4S] cluster. A helical transmembrane segment spans residues 339-359; sequence TLIYTALWSGVGLALIVALFL. Residues 360-477 are Periplasmic-facing; that stretch reads RSPIDINVTP…HDTIFNGRGN (118 aa).

[4Fe-4S] cluster is required as a cofactor.

It localises to the cell membrane. Its function is as follows. Involved in a membrane generated redox signal; required to maintain repression of photosynthesis gene expression in the presence of oxygen. This is Protein RdxB (rdxB) from Cereibacter sphaeroides (strain ATCC 17023 / DSM 158 / JCM 6121 / CCUG 31486 / LMG 2827 / NBRC 12203 / NCIMB 8253 / ATH 2.4.1.) (Rhodobacter sphaeroides).